The following is a 417-amino-acid chain: UDP-N-acetylglucosamine 1-carboxyvinyltransferase (417 aa).

22–23 (KN) provides a ligand contact to phosphoenolpyruvate. UDP-N-acetyl-alpha-D-glucosamine is bound at residue R93. C117 serves as the catalytic Proton donor. Residue C117 is modified to 2-(S-cysteinyl)pyruvic acid O-phosphothioketal. UDP-N-acetyl-alpha-D-glucosamine contacts are provided by residues 122 to 126 (RPVDQ), D304, and I326.

This sequence belongs to the EPSP synthase family. MurA subfamily.

Its subcellular location is the cytoplasm. The enzyme catalyses phosphoenolpyruvate + UDP-N-acetyl-alpha-D-glucosamine = UDP-N-acetyl-3-O-(1-carboxyvinyl)-alpha-D-glucosamine + phosphate. It functions in the pathway cell wall biogenesis; peptidoglycan biosynthesis. Functionally, cell wall formation. Adds enolpyruvyl to UDP-N-acetylglucosamine. This chain is UDP-N-acetylglucosamine 1-carboxyvinyltransferase, found in Neisseria meningitidis serogroup C (strain 053442).